The sequence spans 419 residues: MLLDTLQTQFRHYFPTQRNFVLGLSGGIDSIVLLHLLAELQLNLRAVHIHHGLSPNADNWAAFCEQVCKRLKIPFILQKVTVDRSEGIEAGARAARYQAIGEIIQPNEVLVTAHHLDDQTETFLLALKRGSGIKGLSAMQAVGFWQNFTIFRPLLNVSKAQIEQYALQQQFTWIEDESNHDSHYDRNFLRNEVLPIVNQRWQHFSQMVARSAQHCAEQQMLLEELLAQELQRYADFSEKRLNIEAFPQFSLAKQQQLIRLWLEKCGAQMPSTAQLMQIIQQTIYADVDKNPQLKLADFWLRRYQHHLYLTGELLEPDDFCQPLFAQQSLTLPDGIGELQHLGDSIIYQKSGKIDRLLLPKVLVNAPLQVKLTHQGKVKQYAKPMREEMKKRYQQAQVPVWLRKRTPLIFFHDQLVFICH.

An ATP-binding site is contributed by 25–30 (SGGIDS).

This sequence belongs to the tRNA(Ile)-lysidine synthase family.

The protein localises to the cytoplasm. It carries out the reaction cytidine(34) in tRNA(Ile2) + L-lysine + ATP = lysidine(34) in tRNA(Ile2) + AMP + diphosphate + H(+). Ligates lysine onto the cytidine present at position 34 of the AUA codon-specific tRNA(Ile) that contains the anticodon CAU, in an ATP-dependent manner. Cytidine is converted to lysidine, thus changing the amino acid specificity of the tRNA from methionine to isoleucine. The protein is tRNA(Ile)-lysidine synthase of Actinobacillus pleuropneumoniae serotype 7 (strain AP76).